The primary structure comprises 87 residues: Putative sodium channel toxin Ts40 (87 aa).

A signal peptide spans 1-19; sequence MTALFYLLFLTSVIIETHQ. Disulfide bonds link Cys-41/Cys-63, Cys-47/Cys-68, and Cys-51/Cys-70.

The protein belongs to the long (4 C-C) scorpion toxin superfamily. Sodium channel inhibitor family. As to expression, expressed by the venom gland.

The protein resides in the secreted. In terms of biological role, putative sodium channel toxin. This chain is Putative sodium channel toxin Ts40, found in Tityus serrulatus (Brazilian scorpion).